The following is an 89-amino-acid chain: UPF0175 protein ssl1255 (89 aa).

Belongs to the UPF0175 family.

This Synechocystis sp. (strain ATCC 27184 / PCC 6803 / Kazusa) protein is UPF0175 protein ssl1255.